We begin with the raw amino-acid sequence, 73 residues long: uncharacterized protein (73 aa).

This is an uncharacterized protein from Escherichia coli (strain K12).